The primary structure comprises 335 residues: DNA-directed RNA polymerase subunit alpha (335 aa).

The interval 1 to 233 (MIRDEISVSI…DLFIPFLHGE (233 aa)) is alpha N-terminal domain (alpha-NTD). An alpha C-terminal domain (alpha-CTD) region spans residues 264–335 (KEKIAFQLIF…KLFAIDPPRN (72 aa)).

Belongs to the RNA polymerase alpha chain family. As to quaternary structure, in plastids the minimal PEP RNA polymerase catalytic core is composed of four subunits: alpha, beta, beta', and beta''. When a (nuclear-encoded) sigma factor is associated with the core the holoenzyme is formed, which can initiate transcription.

The protein localises to the plastid. It localises to the chloroplast. The enzyme catalyses RNA(n) + a ribonucleoside 5'-triphosphate = RNA(n+1) + diphosphate. DNA-dependent RNA polymerase catalyzes the transcription of DNA into RNA using the four ribonucleoside triphosphates as substrates. The chain is DNA-directed RNA polymerase subunit alpha from Pinus thunbergii (Japanese black pine).